Consider the following 1166-residue polypeptide: Peroxisomal ATPase PEX6 (1166 aa).

This sequence belongs to the AAA ATPase family. Interacts with PEX1; forming the PEX1-PEX6 AAA ATPase complex, which is composed of a heterohexamer formed by a trimer of PEX1-PEX6 dimers.

Its subcellular location is the membrane. The catalysed reaction is ATP + H2O = ADP + phosphate + H(+). Its function is as follows. Component of the PEX1-PEX6 AAA ATPase complex involved in peroxisome biosynthesis. The complex acts as a protein dislocase complex that mediates the ATP-dependent extraction of the PEX5 receptor from peroxisomal membranes, an essential step for PEX5 recycling. Specifically recognizes PEX5 monoubiquitinated at 'Cys-6', and pulls it out of the peroxisome lumen through the PEX2-PEX10-PEX12 retrotranslocation channel. Extraction by the PEX1-PEX6 AAA ATPase complex is accompanied by unfolding of the TPR repeats and release of bound cargo from PEX5. In Komagataella phaffii (strain GS115 / ATCC 20864) (Yeast), this protein is Peroxisomal ATPase PEX6.